The following is a 286-amino-acid chain: Homoserine kinase (286 aa).

An ATP-binding site is contributed by 78–88; it reads PLARGLGSSSS.

The protein belongs to the GHMP kinase family. Homoserine kinase subfamily.

It is found in the cytoplasm. It catalyses the reaction L-homoserine + ATP = O-phospho-L-homoserine + ADP + H(+). The protein operates within amino-acid biosynthesis; L-threonine biosynthesis; L-threonine from L-aspartate: step 4/5. Functionally, catalyzes the ATP-dependent phosphorylation of L-homoserine to L-homoserine phosphate. This chain is Homoserine kinase, found in Streptococcus suis (strain 98HAH33).